Here is a 183-residue protein sequence, read N- to C-terminus: Dual-action ribosomal maturation protein DarP (183 aa).

Belongs to the DarP family.

It is found in the cytoplasm. Member of a network of 50S ribosomal subunit biogenesis factors which assembles along the 30S-50S interface, preventing incorrect 23S rRNA structures from forming. Promotes peptidyl transferase center (PTC) maturation. This is Dual-action ribosomal maturation protein DarP from Escherichia coli O6:H1 (strain CFT073 / ATCC 700928 / UPEC).